The sequence spans 736 residues: Prolyl 3-hydroxylase 1 (736 aa).

The first 22 residues, 1 to 22, serve as a signal peptide directing secretion; sequence MAVRALKLLTTLLAVVAAASQA. TPR repeat units follow at residues 35-68, 143-176, 205-238, and 301-334; these read PDLL…RAAL, RSPY…NPEH, HMQE…YFVA, and PSHY…FPND. Residue Asn-316 is glycosylated (N-linked (GlcNAc...) asparagine). Residues 401–439 adopt a coiled-coil conformation; that stretch reads KRLQEKQKSERETAVRISQEIGNLMKEIETLVEEKTKES. Residues Asn-467 and Asn-540 are each glycosylated (N-linked (GlcNAc...) asparagine). The region spanning 564 to 678 is the Fe2OG dioxygenase domain; the sequence is SHLVCRTAIE…RCAIALWFTL (115 aa). Residues His-587, Asp-589, and His-659 each coordinate Fe cation. Residue Arg-669 is part of the active site. The interval 699–736 is disordered; it reads SPEEMDLSQEQPLDAQQGPPEPAQESLSGSESKPKDEL. A Prevents secretion from ER motif is present at residues 733–736; sequence KDEL.

Belongs to the leprecan family. Fe cation is required as a cofactor. It depends on L-ascorbate as a cofactor. O-glycosylated; chondroitin sulfate.

Its subcellular location is the endoplasmic reticulum. It localises to the secreted. It is found in the extracellular space. The protein localises to the extracellular matrix. It carries out the reaction L-prolyl-[collagen] + 2-oxoglutarate + O2 = trans-3-hydroxy-L-prolyl-[collagen] + succinate + CO2. Functionally, basement membrane-associated chondroitin sulfate proteoglycan (CSPG). Has prolyl 3-hydroxylase activity catalyzing the post-translational formation of 3-hydroxyproline in -Xaa-Pro-Gly- sequences in collagens, especially types IV and V. May be involved in the secretory pathway of cells. Has growth suppressive activity in fibroblasts. This Homo sapiens (Human) protein is Prolyl 3-hydroxylase 1.